The primary structure comprises 164 residues: Phosphopantetheine adenylyltransferase (164 aa).

Residue S10 coordinates substrate. Residues 10-11 (SF) and H18 each bind ATP. Residues K42, T79, and R93 each coordinate substrate. ATP is bound by residues 94–96 (GLR), E104, and 129–135 (VRPITAS).

It belongs to the bacterial CoaD family. In terms of assembly, homohexamer. Mg(2+) serves as cofactor.

Its subcellular location is the cytoplasm. The enzyme catalyses (R)-4'-phosphopantetheine + ATP + H(+) = 3'-dephospho-CoA + diphosphate. The protein operates within cofactor biosynthesis; coenzyme A biosynthesis; CoA from (R)-pantothenate: step 4/5. Functionally, reversibly transfers an adenylyl group from ATP to 4'-phosphopantetheine, yielding dephospho-CoA (dPCoA) and pyrophosphate. The sequence is that of Phosphopantetheine adenylyltransferase from Bradyrhizobium sp. (strain ORS 278).